Consider the following 499-residue polypeptide: L-arabinose isomerase (499 aa).

Mn(2+) contacts are provided by Glu-306, Glu-333, His-350, and His-449.

This sequence belongs to the arabinose isomerase family. It depends on Mn(2+) as a cofactor.

The catalysed reaction is beta-L-arabinopyranose = L-ribulose. Its pathway is carbohydrate degradation; L-arabinose degradation via L-ribulose; D-xylulose 5-phosphate from L-arabinose (bacterial route): step 1/3. Catalyzes the conversion of L-arabinose to L-ribulose. The polypeptide is L-arabinose isomerase (Tolumonas auensis (strain DSM 9187 / NBRC 110442 / TA 4)).